A 312-amino-acid polypeptide reads, in one-letter code: Methionyl-tRNA formyltransferase (312 aa).

Position 109-112 (109-112) interacts with (6S)-5,6,7,8-tetrahydrofolate; the sequence is SLLP.

Belongs to the Fmt family.

The catalysed reaction is L-methionyl-tRNA(fMet) + (6R)-10-formyltetrahydrofolate = N-formyl-L-methionyl-tRNA(fMet) + (6S)-5,6,7,8-tetrahydrofolate + H(+). Attaches a formyl group to the free amino group of methionyl-tRNA(fMet). The formyl group appears to play a dual role in the initiator identity of N-formylmethionyl-tRNA by promoting its recognition by IF2 and preventing the misappropriation of this tRNA by the elongation apparatus. The protein is Methionyl-tRNA formyltransferase of Caulobacter sp. (strain K31).